Here is a 320-residue protein sequence, read N- to C-terminus: ATP-dependent 6-phosphofructokinase (320 aa).

ATP is bound at residue Gly-12. 22 to 26 (RAVVR) serves as a coordination point for ADP. ATP is bound by residues 73-74 (RF) and 103-106 (GDGS). Asp-104 contributes to the Mg(2+) binding site. 126 to 128 (TID) is a binding site for substrate. Asp-128 serves as the catalytic Proton acceptor. Residue Arg-155 coordinates ADP. Substrate contacts are provided by residues Arg-163 and 170–172 (MGR). Residues 186–188 (GAE) and 214–216 (KNH) contribute to the ADP site. Substrate-binding positions include Glu-223, Arg-244, and 250–253 (HIQR).

The protein belongs to the phosphofructokinase type A (PFKA) family. ATP-dependent PFK group I subfamily. Prokaryotic clade 'B1' sub-subfamily. Homotetramer. Requires Mg(2+) as cofactor.

It is found in the cytoplasm. It catalyses the reaction beta-D-fructose 6-phosphate + ATP = beta-D-fructose 1,6-bisphosphate + ADP + H(+). Its pathway is carbohydrate degradation; glycolysis; D-glyceraldehyde 3-phosphate and glycerone phosphate from D-glucose: step 3/4. Allosterically activated by ADP and other diphosphonucleosides, and allosterically inhibited by phosphoenolpyruvate. In terms of biological role, catalyzes the phosphorylation of D-fructose 6-phosphate to fructose 1,6-bisphosphate by ATP, the first committing step of glycolysis. The polypeptide is ATP-dependent 6-phosphofructokinase (Teredinibacter turnerae (strain ATCC 39867 / T7901)).